We begin with the raw amino-acid sequence, 745 residues long: Capsid protein (745 aa).

4 disordered regions span residues 44 to 64 (RRRF…GRRK), 580 to 602 (SQAI…TLPR), 638 to 662 (EYSS…RPEG), and 678 to 699 (QDSQ…QAHQ). Over residues 681–692 (QDSEESQEEAPL) the composition is skewed to acidic residues.

The protein belongs to the anelloviridae capsid protein family.

It is found in the virion. In terms of biological role, self assemble to form an icosahedral capsid. This chain is Capsid protein, found in Torque teno virus (isolate Human/China/CT23F/2001) (TTV).